The primary structure comprises 558 residues: Membrane transporter D2 (558 aa).

The tract at residues 1 to 28 (MTLKKRSSAPELPTSLDEDEEEDSPQPL) is disordered. Residues 1–38 (MTLKKRSSAPELPTSLDEDEEEDSPQPLSNTPFFSMKN) lie on the Cytoplasmic side of the membrane. The helical transmembrane segment at 39–59 (LIVATPIILTPLLYGYNLGFV) threads the bilayer. The Extracellular portion of the chain corresponds to 60 to 152 (GPYSTMYGYA…QVGYSSIQSG (93 aa)). A helical transmembrane segment spans residues 153–173 (VFAGSLVIGSTMGALMGGYLT). The Cytoplasmic segment spans residues 174-179 (KRLDYC). The chain crosses the membrane as a helical span at residues 180 to 200 (KSFLFIGLLSVIGNVLTHVAT). The Extracellular segment spans residues 201 to 204 (GLFH). A helical membrane pass occupies residues 205–225 (YWVLFVARIVLGFPLGWQSIT). The Cytoplasmic segment spans residues 226–241 (SSHYTDKFAPANHAKT). Residues 242-262 (LGTLFQVSVSTGIFVTSFFGL) form a helical membrane-spanning segment. The Extracellular segment spans residues 263 to 281 (VLGNTIQYDAASNANTMGR). The helical transmembrane segment at 282–302 (MQGLVSVSTLLSIFVVFLPLI) threads the bilayer. The Cytoplasmic segment spans residues 303 to 335 (TKDGYSKSRRGDYEGENSEDASRKAAEEYTMTQ). A helical transmembrane segment spans residues 336–356 (MIGPILNGVAMGCVTQLTGIN). The Extracellular segment spans residues 357 to 373 (ANMNFAPTIMSNLGLQP). Residues 374–394 (LVGNIIVMAWNMLATFCVIPL) form a helical membrane-spanning segment. At 395–402 (SRRFSMRT) the chain is on the cytoplasmic side. A helical membrane pass occupies residues 403 to 423 (LFLFCGFVGSLCCVFLGGIPV). Over 424 to 441 (YPGVTKSDKAISGIAITG) the chain is Extracellular. A helical membrane pass occupies residues 442–463 (IAIFIALYEMGVGPCFYVLAVD). The Cytoplasmic segment spans residues 464-478 (VFPESFRPIGSSITV). A helical transmembrane segment spans residues 479–499 (GVMFIFNLIINICYPIATEGI). At 500–512 (SGGPSGNPNKGQA) the chain is on the extracellular side. A helical membrane pass occupies residues 513–533 (VAFIFFGCIGVVACVIEYFFL). At 534-558 (QPWVEPEAKMTDDLDGAAVPEGKHD) the chain is on the cytoplasmic side.

Belongs to the major facilitator superfamily. Sugar transporter (TC 2.A.1.1) family.

It is found in the membrane. The chain is Membrane transporter D2 from Leishmania donovani.